We begin with the raw amino-acid sequence, 767 residues long: Dipeptidyl peptidase 4 (767 aa).

The Cytoplasmic portion of the chain corresponds to 1–6 (MKTPWK). The helical; Signal-anchor for type II membrane protein transmembrane segment at 7 to 28 (VLLGLLGVAALVTIITVPVVLL) threads the bilayer. Residues 29-767 (NKDEAAADSR…HFLQQCFSLR (739 aa)) lie on the Extracellular side of the membrane. Residues asparagine 83, asparagine 90, asparagine 148, asparagine 217, asparagine 227, and asparagine 319 are each glycosylated (N-linked (GlcNAc...) asparagine). 4 disulfides stabilise this stretch: cysteine 326-cysteine 337, cysteine 383-cysteine 395, cysteine 445-cysteine 448, and cysteine 455-cysteine 473. N-linked (GlcNAc...) asparagine glycosylation is present at asparagine 521. Serine 631 functions as the Charge relay system in the catalytic mechanism. Cysteine 650 and cysteine 763 are disulfide-bonded. N-linked (GlcNAc...) asparagine glycosylation is present at asparagine 686. Active-site charge relay system residues include aspartate 709 and histidine 741.

The protein belongs to the peptidase S9B family. DPPIV subfamily. As to quaternary structure, monomer. Homodimer. Heterodimer with Seprase (FAP). Requires homodimerization for optimal dipeptidyl peptidase activity and T-cell costimulation. Found in a membrane raft complex, at least composed of BCL10, CARD11, DPP4 and IKBKB. Associates with collagen. Interacts with PTPRC; the interaction is enhanced in an interleukin-12-dependent manner in activated lymphocytes. Interacts (via extracellular domain) with ADA; does not inhibit its dipeptidyl peptidase activity. Interacts with CAV1 (via the N-terminus); the interaction is direct. Interacts (via cytoplasmic tail) with CARD11 (via PDZ domain); its homodimerization is necessary for interaction with CARD11. Interacts with IGF2R; the interaction is direct. Interacts with GPC3. The soluble form (Dipeptidyl peptidase 4 soluble form also named SDPP) derives from the membrane form (Dipeptidyl peptidase 4 membrane form also named MDPP) by proteolytic processing. Post-translationally, N- and O-Glycosylated. In terms of processing, phosphorylated. Mannose 6-phosphate residues in the carbohydrate moiety are necessary for interaction with IGF2R in activated T-cells. Mannose 6-phosphorylation is induced during T-cell activation. Expressed in bile ducts and other epithelial brush borders (small intestine, kidney, colon, pancreatic duct); acinar structures in salivary glands; endothelial structures and T cell areas in thymus, spleen and lymph node.

The protein resides in the secreted. Its subcellular location is the cell membrane. It is found in the apical cell membrane. The protein localises to the cell projection. It localises to the invadopodium membrane. The protein resides in the lamellipodium membrane. Its subcellular location is the cell junction. It is found in the membrane raft. It catalyses the reaction Release of an N-terminal dipeptide, Xaa-Yaa-|-Zaa-, from a polypeptide, preferentially when Yaa is Pro, provided Zaa is neither Pro nor hydroxyproline.. With respect to regulation, inhibited by GPC3 and diprotin A. In terms of biological role, cell surface glycoprotein receptor involved in the costimulatory signal essential for T-cell receptor (TCR)-mediated T-cell activation. Acts as a positive regulator of T-cell coactivation, by binding at least ADA, CAV1, IGF2R, and PTPRC. Its binding to CAV1 and CARD11 induces T-cell proliferation and NF-kappa-B activation in a T-cell receptor/CD3-dependent manner. Its interaction with ADA also regulates lymphocyte-epithelial cell adhesion. In association with FAP is involved in the pericellular proteolysis of the extracellular matrix (ECM), the migration and invasion of endothelial cells into the ECM. May be involved in the promotion of lymphatic endothelial cells adhesion, migration and tube formation. When overexpressed, enhanced cell proliferation, a process inhibited by GPC3. Also acts as a serine exopeptidase with a dipeptidyl peptidase activity that regulates various physiological processes by cleaving peptides in the circulation, including many chemokines, mitogenic growth factors, neuropeptides and peptide hormones. Removes N-terminal dipeptides sequentially from polypeptides having unsubstituted N-termini provided that the penultimate residue is proline. This is Dipeptidyl peptidase 4 (Dpp4) from Rattus norvegicus (Rat).